Here is a 101-residue protein sequence, read N- to C-terminus: Putative pterin-4-alpha-carbinolamine dehydratase (101 aa).

This sequence belongs to the pterin-4-alpha-carbinolamine dehydratase family.

The catalysed reaction is (4aS,6R)-4a-hydroxy-L-erythro-5,6,7,8-tetrahydrobiopterin = (6R)-L-erythro-6,7-dihydrobiopterin + H2O. This is Putative pterin-4-alpha-carbinolamine dehydratase from Nitrobacter hamburgensis (strain DSM 10229 / NCIMB 13809 / X14).